Reading from the N-terminus, the 3381-residue chain is Versican core protein (3381 aa).

The N-terminal stretch at Met1–Ala20 is a signal peptide. The Ig-like V-type domain occupies Leu21 to Thr147. 5 cysteine pairs are disulfide-bonded: Cys44–Cys131, Cys173–Cys244, Cys197–Cys218, Cys271–Cys346, and Cys295–Cys316. The N-linked (GlcNAc...) asparagine glycan is linked to Asn57. 2 consecutive Link domains span residues Val151–Val246 and Asp252–Lys348. N-linked (GlcNAc...) asparagine glycosylation is found at Asn331 and Asn352. The GAG-alpha (glucosaminoglycan attachment domain) stretch occupies residues Pro349–Gly1336. The segment covering Pro417 to Glu427 has biased composition (polar residues). Disordered stretches follow at residues Pro417 to Lys437 and Glu603 to Arg623. The O-linked (Xyl...) (chondroitin sulfate) serine glycan is linked to Ser660. A disordered region spans residues Asp816–Pro866. N-linked (GlcNAc...) asparagine glycosylation is present at Asn817. The span at Gly846–Thr863 shows a compositional bias: basic and acidic residues. 2 N-linked (GlcNAc...) asparagine glycosylation sites follow: Asn965 and Asn1017. The segment covering Glu1043 to Pro1052 has biased composition (basic and acidic residues). Disordered stretches follow at residues Glu1043 to Ser1081 and Phe1218 to Glu1244. N-linked (GlcNAc...) asparagine glycosylation is present at Asn1333. Positions Arg1337–Gly3074 are GAG-beta. The segment at Met1338–Thr1362 is disordered. Acidic residues predominate over residues Ser1352–Thr1362. An N-linked (GlcNAc...) asparagine glycan is attached at Asn1393. Basic and acidic residues predominate over residues Lys1417–Gln1428. 3 disordered regions span residues Lys1417–Ser1446, Gly1455–Ile1474, and Thr1484–Ser1512. 2 N-linked (GlcNAc...) asparagine glycosylation sites follow: Asn1437 and Asn1463. O-linked (Xyl...) (chondroitin sulfate) serine glycans are attached at residues Ser1539 and Ser1621. Residue Asn1653 is glycosylated (N-linked (GlcNAc...) asparagine). The segment at Pro1708 to Val1785 is disordered. The span at Glu1712–Gly1721 shows a compositional bias: basic and acidic residues. The span at Ala1726 to Leu1738 shows a compositional bias: polar residues. A compositionally biased stretch (low complexity) spans Ser1743–Ala1761. Residues Lys1764–Val1784 show a composition bias toward polar residues. Residues Ser1928 and Ser1952 are each glycosylated (O-linked (Xyl...) (chondroitin sulfate) serine). The segment covering Pro1964–Thr1976 has biased composition (polar residues). Disordered stretches follow at residues Pro1964–Leu1986 and Glu2041–Val2126. Residues Asn1974, Asn2045, Asn2074, and Asn2103 are each glycosylated (N-linked (GlcNAc...) asparagine). A compositionally biased stretch (basic and acidic residues) spans Ser2065–His2075. Ser2109 carries the post-translational modification Phosphoserine. 2 O-linked (Xyl...) (chondroitin sulfate) serine glycosylation sites follow: Ser2240 and Ser2247. Asn2263, Asn2290, and Asn2356 each carry an N-linked (GlcNAc...) asparagine glycan. Disordered regions lie at residues Glu2338–Lys2388, Glu2490–Thr2512, and Thr2594–Gln2615. Polar residues-rich tracts occupy residues Leu2345–Gln2357 and Thr2367–Val2383. Phosphoserine is present on residues Ser2607 and Ser2608. Thr2612 carries the phosphothreonine modification. 2 N-linked (GlcNAc...) asparagine glycosylation sites follow: Asn2623 and Asn2641. Ser2714, Ser2715, and Ser2759 each carry an O-linked (Xyl...) (chondroitin sulfate) serine glycan. The interval Pro2819–Lys2893 is disordered. Residues Ala2840–Val2851 show a composition bias toward polar residues. Asn2919 and Asn3052 each carry an N-linked (GlcNAc...) asparagine glycan. Residues Gly3074–Glu3110 enclose the EGF-like 1 domain. Cystine bridges form between Cys3078-Cys3089, Cys3083-Cys3098, Cys3100-Cys3109, Cys3116-Cys3127, Cys3121-Cys3136, Cys3138-Cys3147, Cys3154-Cys3165, Cys3182-Cys3274, Cys3250-Cys3266, Cys3281-Cys3324, and Cys3310-Cys3337. Positions Asp3112–Glu3148 constitute an EGF-like 2; calcium-binding domain. The region spanning Phe3161–Lys3275 is the C-type lectin domain. The Sushi domain occupies Val3279–Asn3339. Residues Asn3354 and Asn3364 are each glycosylated (N-linked (GlcNAc...) asparagine). A compositionally biased stretch (polar residues) spans Ser3355 to Thr3365. The disordered stretch occupies residues Ser3355–Arg3381.

Belongs to the aggrecan/versican proteoglycan family. As to quaternary structure, interacts with FBLN1. In terms of processing, phosphorylated by FAM20C in the extracellular medium. Proteolytically cleaved by ADAMTS5 and ADAMTS15 in the pericellular matrix surrounding myoblasts, facilitating myoblast contact and fusion which is required for skeletal muscle development and regeneration. In terms of tissue distribution, cerebral white matter. Isoform V0 and isoform V1 are expressed in the central nervous system, and in a number of mesenchymal and epithelial tissues; the major isoform V2 is restricted to the central nervous system.

It localises to the secreted. It is found in the extracellular space. Its subcellular location is the extracellular matrix. The protein localises to the cell projection. The protein resides in the cilium. It localises to the photoreceptor outer segment. It is found in the interphotoreceptor matrix. Its function is as follows. May play a role in intercellular signaling and in connecting cells with the extracellular matrix. May take part in the regulation of cell motility, growth and differentiation. Binds hyaluronic acid. This Bos taurus (Bovine) protein is Versican core protein (VCAN).